We begin with the raw amino-acid sequence, 274 residues long: Nitrogenase iron protein (274 aa).

Position 8–15 (8–15 (GKGGIGKS)) interacts with ATP. [4Fe-4S] cluster is bound at residue Cys94. ADP-ribosylarginine; by dinitrogenase reductase ADP-ribosyltransferase is present on Arg97. Cys131 provides a ligand contact to [4Fe-4S] cluster.

Belongs to the NifH/BchL/ChlL family. Homodimer. [4Fe-4S] cluster is required as a cofactor. In terms of processing, the reversible ADP-ribosylation of Arg-97 inactivates the nitrogenase reductase and regulates nitrogenase activity.

The catalysed reaction is N2 + 8 reduced [2Fe-2S]-[ferredoxin] + 16 ATP + 16 H2O = H2 + 8 oxidized [2Fe-2S]-[ferredoxin] + 2 NH4(+) + 16 ADP + 16 phosphate + 6 H(+). The key enzymatic reactions in nitrogen fixation are catalyzed by the nitrogenase complex, which has 2 components: the iron protein and the molybdenum-iron protein. This is Nitrogenase iron protein from Chlorobium limicola (strain DSM 245 / NBRC 103803 / 6330).